Consider the following 917-residue polypeptide: Protein FAN (917 aa).

The region spanning 176-247 (RLARTSFDKN…QDVRRIYKRR (72 aa)) is the GRAM domain. The region spanning 189–286 (NISEKLHMEC…DRDDLYFYIA (98 aa)) is the BEACH-type PH domain. A BEACH domain is found at 290–575 (EHHVAEHTAE…QLFVTPHPRR (286 aa)). WD repeat units follow at residues 628–658 (IHKE…KMFS), 670–700 (FSNM…YFYS), 712–740 (GHDD…KVWS), 761–791 (EHDV…NIWD), 803–833 (CHSG…NVID), and 884–914 (GHTG…IFWK).

Ubiquitous.

In terms of biological role, couples the p55 TNF-receptor (TNF-R55 / TNFR1) to neutral sphingomyelinase (N-SMASE). Specifically binds to the N-smase activation domain of TNF-R55. May regulate ceramide production by N-SMASE. In Homo sapiens (Human), this protein is Protein FAN (NSMAF).